Here is a 288-residue protein sequence, read N- to C-terminus: Shikimate dehydrogenase (NADP(+)) (288 aa).

Residues 21–23 and T68 each bind shikimate; that span reads SLS. K72 functions as the Proton acceptor in the catalytic mechanism. 2 residues coordinate shikimate: N93 and D108. NADP(+) is bound by residues 132–136 and L230; that span reads GNGGA. Y232 contributes to the shikimate binding site. Residue G253 coordinates NADP(+).

The protein belongs to the shikimate dehydrogenase family. Homodimer.

The enzyme catalyses shikimate + NADP(+) = 3-dehydroshikimate + NADPH + H(+). The protein operates within metabolic intermediate biosynthesis; chorismate biosynthesis; chorismate from D-erythrose 4-phosphate and phosphoenolpyruvate: step 4/7. Functionally, involved in the biosynthesis of the chorismate, which leads to the biosynthesis of aromatic amino acids. Catalyzes the reversible NADPH linked reduction of 3-dehydroshikimate (DHSA) to yield shikimate (SA). This Crocosphaera subtropica (strain ATCC 51142 / BH68) (Cyanothece sp. (strain ATCC 51142)) protein is Shikimate dehydrogenase (NADP(+)).